Consider the following 454-residue polypeptide: Bifunctional protein GlmU (454 aa).

The tract at residues 1–226 (MALNVVILAA…AIEVEGANNR (226 aa)) is pyrophosphorylase. UDP-N-acetyl-alpha-D-glucosamine contacts are provided by residues 8-11 (LAAG), Lys-22, Gln-73, 78-79 (GT), 100-102 (YGD), Gly-137, Glu-151, Asn-166, and Asn-224. Asp-102 is a Mg(2+) binding site. Position 224 (Asn-224) interacts with Mg(2+). The segment at 227-247 (VQLAQLERAYQAREAEKLMIA) is linker. The segment at 248–454 (GANLRDPSRI…GWQRPVKIKK (207 aa)) is N-acetyltransferase. 2 residues coordinate UDP-N-acetyl-alpha-D-glucosamine: Arg-330 and Lys-348. The Proton acceptor role is filled by His-360. UDP-N-acetyl-alpha-D-glucosamine contacts are provided by Tyr-363 and Asn-374. Acetyl-CoA contacts are provided by residues Ala-377, 383–384 (NY), Ser-402, Ala-420, and Arg-437.

It in the N-terminal section; belongs to the N-acetylglucosamine-1-phosphate uridyltransferase family. This sequence in the C-terminal section; belongs to the transferase hexapeptide repeat family. In terms of assembly, homotrimer. Requires Mg(2+) as cofactor.

Its subcellular location is the cytoplasm. It catalyses the reaction alpha-D-glucosamine 1-phosphate + acetyl-CoA = N-acetyl-alpha-D-glucosamine 1-phosphate + CoA + H(+). It carries out the reaction N-acetyl-alpha-D-glucosamine 1-phosphate + UTP + H(+) = UDP-N-acetyl-alpha-D-glucosamine + diphosphate. It participates in nucleotide-sugar biosynthesis; UDP-N-acetyl-alpha-D-glucosamine biosynthesis; N-acetyl-alpha-D-glucosamine 1-phosphate from alpha-D-glucosamine 6-phosphate (route II): step 2/2. The protein operates within nucleotide-sugar biosynthesis; UDP-N-acetyl-alpha-D-glucosamine biosynthesis; UDP-N-acetyl-alpha-D-glucosamine from N-acetyl-alpha-D-glucosamine 1-phosphate: step 1/1. Its pathway is bacterial outer membrane biogenesis; LPS lipid A biosynthesis. Its function is as follows. Catalyzes the last two sequential reactions in the de novo biosynthetic pathway for UDP-N-acetylglucosamine (UDP-GlcNAc). The C-terminal domain catalyzes the transfer of acetyl group from acetyl coenzyme A to glucosamine-1-phosphate (GlcN-1-P) to produce N-acetylglucosamine-1-phosphate (GlcNAc-1-P), which is converted into UDP-GlcNAc by the transfer of uridine 5-monophosphate (from uridine 5-triphosphate), a reaction catalyzed by the N-terminal domain. This is Bifunctional protein GlmU from Shewanella sp. (strain MR-4).